The following is a 498-amino-acid chain: Elastase (498 aa).

The N-terminal stretch at 1 to 23 (MKKVSTLDLLFVAIMGVSPAAFA) is a signal peptide. Positions 24-197 (ADLIDVSKLP…VLDQWEGLAH (174 aa)) are excised as a propeptide. The cysteines at positions 227 and 255 are disulfide-linked. Position 333 (Asp333) interacts with Ca(2+). His337 serves as a coordination point for Zn(2+). Residue Glu338 is part of the active site. The Zn(2+) site is built by His341 and Glu361. Ca(2+) is bound by residues Glu369, Glu372, Asp380, and Leu382. The active-site Proton donor is the His420. An intrachain disulfide couples Cys467 to Cys494.

The protein belongs to the peptidase M4 family. Monomer. Ca(2+) serves as cofactor. It depends on Zn(2+) as a cofactor. Post-translationally, made as a membrane-associated pre-pro-protein, which is exported to the periplasm (yielding pro-elastase) with removal of the signal peptide. Under certain conditions pro-elastase can accumulate. The pro-peptide is removed in the periplasm yielding a (mature length) 33 kDa protein, probably by autocatalysis. The pro-peptide probably remains associated with elastase and can be secreted. Further alterations (perhaps processing) seems to be required before secretion into the extracellular space.

Its subcellular location is the secreted. The enzyme catalyses Hydrolysis of proteins including elastin, collagen types III and IV, fibronectin and immunoglobulin A, generally with bulky hydrophobic group at P1'. Insulin B chain cleavage pattern identical to that of thermolysin, but specificity differs in other respects.. Its activity is regulated as follows. Inhibited by phosphoramidon. Functionally, cleaves host elastin, collagen, IgG, and several complement components as well as endogenous pro-aminopeptidase. Autocatalyses processing of its pro-peptide. Processes the pro-peptide of pro-chitin-binding protein (cbpD). Involved in the pathogenesis of P.aeruginosa infections. This chain is Elastase (lasB), found in Pseudomonas aeruginosa (strain ATCC 15692 / DSM 22644 / CIP 104116 / JCM 14847 / LMG 12228 / 1C / PRS 101 / PAO1).